A 493-amino-acid chain; its full sequence is Transcription termination factor MTERF5, chloroplastic (493 aa).

A chloroplast-targeting transit peptide spans 1-43 (MQSLSQLGPSEIFLVARREKPSTRAQLWFTGRLSFRQETNGIR).

This sequence belongs to the mTERF family. As to quaternary structure, interacts with pTAC6. As to expression, expressed in roots, rosette leaves, cauline leaves, stems, flower buds and open flowers.

It is found in the plastid. The protein resides in the chloroplast. Its function is as follows. Transcription termination factor required for processing and steady-state levels of plastid transcripts. Involved also in chloroplast transcriptional pausing, a general feature of chloroplast genes. Specifically and positively regulates the transcription of chloroplast psbEFLJ encoding for photosystem II (PSII) core subunits psbE, psbF, psbL and psbJ; causes the plastid-encoded RNA polymerase (PEP) complex to pause at psbEFLJ by binding to the +30 to +51 region of double-stranded DNA, and recruits additional pTAC6 to the transcriptionally paused region of psbEFLJ. May play a role in response to abiotic stresses. The polypeptide is Transcription termination factor MTERF5, chloroplastic (Arabidopsis thaliana (Mouse-ear cress)).